A 103-amino-acid polypeptide reads, in one-letter code: Protamine-3 (103 aa).

Positions M1 to S103 are disordered. Low complexity predominate over residues T10–S21. Residues G50 to E66 show a composition bias toward acidic residues. Residues E78–A90 show a composition bias toward basic and acidic residues. S95 carries the post-translational modification Phosphoserine.

Belongs to the protamine P3 family.

Its subcellular location is the nucleus. The protein localises to the chromosome. Functionally, protamines substitute for histones in the chromatin of sperm during the haploid phase of spermatogenesis. They compact sperm DNA into a highly condensed, stable and inactive complex. This Homo sapiens (Human) protein is Protamine-3 (PRM3).